The following is a 241-amino-acid chain: Ribonuclease 3 (241 aa).

Residues 16 to 144 (HAEFEKKINY…VIGAIFQDGG (129 aa)) form the RNase III domain. Residue Glu-57 participates in Mg(2+) binding. Catalysis depends on residues Asp-61 and Glu-133. Glu-133 provides a ligand contact to Mg(2+). A DRBM domain is found at 171-240 (DAKSRLQEIL…AALAIKKIES (70 aa)).

Belongs to the ribonuclease III family. In terms of assembly, homodimer. It depends on Mg(2+) as a cofactor.

Its subcellular location is the cytoplasm. The enzyme catalyses Endonucleolytic cleavage to 5'-phosphomonoester.. Its function is as follows. Digests double-stranded RNA. Involved in the processing of primary rRNA transcript to yield the immediate precursors to the large and small rRNAs (23S and 16S). Processes some mRNAs, and tRNAs when they are encoded in the rRNA operon. Processes pre-crRNA and tracrRNA of type II CRISPR loci if present in the organism. This Desulfotalea psychrophila (strain LSv54 / DSM 12343) protein is Ribonuclease 3.